The following is a 124-amino-acid chain: MPTISQLVGSERKRLTKKTKSPALKSCPERRGVCTRVYTSTPKKPNSALRKVARVRLTSGFEVTAYIPGIGHNLQEHSVVLLRGGRVKDLPGVRYHIIRGTLDTAGVKDRRQSRSKYGAKAPKD.

The disordered stretch occupies residues Met-1–Pro-28. 3-methylthioaspartic acid is present on Asp-89. Residues Thr-104 to Asp-124 are disordered.

This sequence belongs to the universal ribosomal protein uS12 family. In terms of assembly, part of the 30S ribosomal subunit. Contacts proteins S8 and S17. May interact with IF1 in the 30S initiation complex.

Its function is as follows. With S4 and S5 plays an important role in translational accuracy. In terms of biological role, interacts with and stabilizes bases of the 16S rRNA that are involved in tRNA selection in the A site and with the mRNA backbone. Located at the interface of the 30S and 50S subunits, it traverses the body of the 30S subunit contacting proteins on the other side and probably holding the rRNA structure together. The combined cluster of proteins S8, S12 and S17 appears to hold together the shoulder and platform of the 30S subunit. The polypeptide is Small ribosomal subunit protein uS12 (Prochlorococcus marinus (strain MIT 9301)).